The chain runs to 210 residues: Small ribosomal subunit protein uS7 (210 aa).

Positions 1-22 (MSDEQPAEDETEEAAAESEDTQ) are enriched in acidic residues. The disordered stretch occupies residues 1 to 23 (MSDEQPAEDETEEAAAESEDTQE).

This sequence belongs to the universal ribosomal protein uS7 family. As to quaternary structure, part of the 30S ribosomal subunit. Contacts proteins S9 and S11.

Functionally, one of the primary rRNA binding proteins, it binds directly to 16S rRNA where it nucleates assembly of the head domain of the 30S subunit. Is located at the subunit interface close to the decoding center. The sequence is that of Small ribosomal subunit protein uS7 from Halobacterium salinarum (strain ATCC 29341 / DSM 671 / R1).